A 603-amino-acid chain; its full sequence is Probable HECT-type ubiquitin ligase-interacting protein creD (603 aa).

Disordered regions lie at residues 375-398 (ELDP…GTLS) and 432-499 (LNIT…MATP). A compositionally biased stretch (basic and acidic residues) spans 443–455 (TDHESQNDSEHRR). The segment covering 465-481 (PSSGSNSHSPSSPVLSR) has biased composition (low complexity). Residues 482–492 (RPSDEVDHEHV) are compositionally biased toward basic and acidic residues.

This sequence belongs to the arrestin family. Interacts with hulA.

Component of the regulatory network controlling carbon source utilization through ubiquitination and deubiquitination involving creA, creB, creC, creD and acrB. May be involved in signaling by recognizing appropriately phosphorylated substrates via its arrestin domains and then recruit a HECT-type ubiquitin ligase such as hulA, leading to ubiquitination of the substrate, providing a link between ubiquitination and phosphorylation in protein regulation and stability. This chain is Probable HECT-type ubiquitin ligase-interacting protein creD (creD), found in Aspergillus flavus (strain ATCC 200026 / FGSC A1120 / IAM 13836 / NRRL 3357 / JCM 12722 / SRRC 167).